A 399-amino-acid polypeptide reads, in one-letter code: uncharacterized protein (399 aa).

Helical transmembrane passes span 7 to 27 (FSAL…LYLI), 33 to 53 (FLQI…FEVP), 79 to 99 (AFFP…IWAL), 131 to 151 (LLIT…SLNI), 153 to 173 (FPFL…SVFI), 208 to 228 (VLLI…ISRY), 242 to 262 (SLGY…TLTI), 296 to 316 (PLGI…HPIV), 335 to 355 (LNSG…GIIS), and 357 to 377 (AFGL…PIIL).

This sequence belongs to the major facilitator superfamily. Drug:H(+) antiporter-3 (DHA3) (TC 2.A.1.21) family.

Its subcellular location is the cell membrane. This is an uncharacterized protein from Bacillus subtilis (strain 168).